A 745-amino-acid polypeptide reads, in one-letter code: Protein PHOX1 (745 aa).

The segment covering 1–10 (MGKPTGKKKN) has biased composition (basic residues). Residues 1–37 (MGKPTGKKKNNNYTEMPPTESSTTGGGKTGKSFDRSA) are disordered. TPR repeat units follow at residues 52–85 (ALEL…LPRD), 90–125 (AYLR…SPRF), and 126–159 (SKAL…EPEN). Residues 280 to 359 (TRTVKLVHGD…GSFRLYIAEV (80 aa)) enclose the PB1 domain. TPR repeat units lie at residues 406–441 (EHWI…YTEA), 443–472 (EDIV…AMFN), 494–528 (ETIL…KSDF), and 553–586 (GEVD…WEEM).

In terms of assembly, interacts with myosin XI-1 and XI-K.

Its subcellular location is the cytoplasmic vesicle membrane. In terms of biological role, carboxylate clamp type tetratricopeptide repeat protein that may act as a potential Hsp90/Hsp70 co-chaperone. Contributes to polar growth of root hairs. This Arabidopsis thaliana (Mouse-ear cress) protein is Protein PHOX1.